A 125-amino-acid polypeptide reads, in one-letter code: Small ribosomal subunit protein uS12 (125 aa).

A 3-methylthioaspartic acid modification is found at aspartate 89. The disordered stretch occupies residues 100–125; the sequence is GSLDTQGVKDRKQSRSKYGAKRPKAA. Residues 113 to 125 are compositionally biased toward basic residues; it reads SRSKYGAKRPKAA.

Belongs to the universal ribosomal protein uS12 family. In terms of assembly, part of the 30S ribosomal subunit. Contacts proteins S8 and S17. May interact with IF1 in the 30S initiation complex.

Functionally, with S4 and S5 plays an important role in translational accuracy. Interacts with and stabilizes bases of the 16S rRNA that are involved in tRNA selection in the A site and with the mRNA backbone. Located at the interface of the 30S and 50S subunits, it traverses the body of the 30S subunit contacting proteins on the other side and probably holding the rRNA structure together. The combined cluster of proteins S8, S12 and S17 appears to hold together the shoulder and platform of the 30S subunit. This Dechloromonas aromatica (strain RCB) protein is Small ribosomal subunit protein uS12.